The primary structure comprises 180 residues: Ribosome-recycling factor (180 aa).

Positions 135 to 156 (SDLKKDNDLSEDSRHRTEDDIQ) are disordered.

The protein belongs to the RRF family.

The protein localises to the cytoplasm. Functionally, responsible for the release of ribosomes from messenger RNA at the termination of protein biosynthesis. May increase the efficiency of translation by recycling ribosomes from one round of translation to another. This Oenococcus oeni (strain ATCC BAA-331 / PSU-1) protein is Ribosome-recycling factor.